The following is a 391-amino-acid chain: Methyltransferase/ribosomally synthesized type I borosin cyclic peptide precursor cmaMA (391 aa).

The interval 1–253 (MDATANPKAG…TISTFYLPPK (253 aa)) is methyltransferase domain. Catalysis depends on residues R72, Y76, and Y98. S-adenosyl-L-methionine-binding residues include Y98, H100, V103, A130, Q172, A215, S246, and T247. A clasp domain region spans residues 254–373 (APSAKVSLNR…AQLSGALKEG (120 aa)). Residues 374–376 (GVP) are precursor leader. An N-methylleucine modification is found at L382. N-methylphenylalanine occurs at positions 385 and 386. N-methylisoleucine is present on residues I387 and I388.

It in the N-terminal section; belongs to the precorrin methyltransferase family. Homodimer. In terms of processing, cmaMA automethylates at Leu-382, Phe-385, Phe-386, Ile-387 and Ile-388 before being processed by the prolyloligopeptidase ledP which likely forms a peptidyl ester upon removal of the follower propeptide, which then undergoes macrocyclization with the N-terminus of the modified core peptide. Peptide backbone alpha-N-methylations change the physicochemical properties of amide bonds to provide structural constraints and other favorable characteristics including biological membrane permeability to peptides.

Its pathway is secondary metabolite biosynthesis. In terms of biological role, fusion protein of the methyltransferase cmaM and a type I borosin core peptide; part of the gene cluster that mediates the biosynthesis of a type I borosin, a highly methylated cyclic peptide with potent biological activities. Type I borosins derive from the C-terminus of the fusion protein, and it is the same protein that methylates its own C-terminus using S-adenosyl methionine (SAM). The C-terminus is subsequently cleaved off and macrocyclized by a prolyloligopeptidase to give the final product. This chain is Methyltransferase/ribosomally synthesized type I borosin cyclic peptide precursor cmaMA, found in Coprinopsis marcescibilis (Agaric fungus).